The sequence spans 83 residues: NAD(P)H-quinone oxidoreductase subunit L (83 aa).

The next 2 helical transmembrane spans lie at 15 to 35 and 53 to 73; these read LFVL…VPLA and LGVY…APFI.

Belongs to the complex I NdhL subunit family. As to quaternary structure, NDH-1 can be composed of about 15 different subunits; different subcomplexes with different compositions have been identified which probably have different functions.

Its subcellular location is the cellular thylakoid membrane. It catalyses the reaction a plastoquinone + NADH + (n+1) H(+)(in) = a plastoquinol + NAD(+) + n H(+)(out). It carries out the reaction a plastoquinone + NADPH + (n+1) H(+)(in) = a plastoquinol + NADP(+) + n H(+)(out). NDH-1 shuttles electrons from an unknown electron donor, via FMN and iron-sulfur (Fe-S) centers, to quinones in the respiratory and/or the photosynthetic chain. The immediate electron acceptor for the enzyme in this species is believed to be plastoquinone. Couples the redox reaction to proton translocation, and thus conserves the redox energy in a proton gradient. Cyanobacterial NDH-1 also plays a role in inorganic carbon-concentration. The sequence is that of NAD(P)H-quinone oxidoreductase subunit L from Synechococcus sp. (strain CC9902).